We begin with the raw amino-acid sequence, 108 residues long: UPF0145 protein LCA_1282 (108 aa).

This sequence belongs to the UPF0145 family.

This chain is UPF0145 protein LCA_1282, found in Latilactobacillus sakei subsp. sakei (strain 23K) (Lactobacillus sakei subsp. sakei).